The sequence spans 1186 residues: ATP-dependent helicase/deoxyribonuclease subunit B (1186 aa).

The region spanning 1–308 (MSVKFLLGRA…AHLEKEWGKN (308 aa)) is the UvrD-like helicase ATP-binding domain. 8–15 (GRAGSGKT) is a binding site for ATP. Residues 288-620 (SLPRFKDNPA…LVGTADRSRY (333 aa)) form the UvrD-like helicase C-terminal domain. Residues Cys-822, Cys-1144, Cys-1147, and Cys-1153 each contribute to the [4Fe-4S] cluster site.

This sequence belongs to the helicase family. AddB/RexB type 1 subfamily. Heterodimer of AddA and AddB. The cofactor is Mg(2+). [4Fe-4S] cluster is required as a cofactor.

In terms of biological role, the heterodimer acts as both an ATP-dependent DNA helicase and an ATP-dependent, dual-direction single-stranded exonuclease. Recognizes the chi site generating a DNA molecule suitable for the initiation of homologous recombination. The AddB subunit has 5' -&gt; 3' nuclease activity but not helicase activity. The protein is ATP-dependent helicase/deoxyribonuclease subunit B of Natranaerobius thermophilus (strain ATCC BAA-1301 / DSM 18059 / JW/NM-WN-LF).